A 230-amino-acid polypeptide reads, in one-letter code: Sugar fermentation stimulation protein homolog (230 aa).

The protein belongs to the SfsA family.

This Ruegeria pomeroyi (strain ATCC 700808 / DSM 15171 / DSS-3) (Silicibacter pomeroyi) protein is Sugar fermentation stimulation protein homolog.